Here is a 253-residue protein sequence, read N- to C-terminus: Small ribosomal subunit protein uS2 (253 aa).

It belongs to the universal ribosomal protein uS2 family.

In Hahella chejuensis (strain KCTC 2396), this protein is Small ribosomal subunit protein uS2.